A 120-amino-acid polypeptide reads, in one-letter code: UPF0102 protein Pfl01_4685 (120 aa).

It belongs to the UPF0102 family.

This Pseudomonas fluorescens (strain Pf0-1) protein is UPF0102 protein Pfl01_4685.